Here is a 298-residue protein sequence, read N- to C-terminus: Serine/threonine-protein kinase 1 (298 aa).

The 239-residue stretch at 38–276 folds into the Protein kinase domain; it reads FIATRPMFEG…FKSLVSHPWF (239 aa). ATP-binding positions include 45–53 and K65; that span reads FEGGRNNVF. The Proton acceptor role is filled by D152.

It belongs to the protein kinase superfamily. Ser/Thr protein kinase family.

It is found in the virion. It localises to the host cytoplasm. The enzyme catalyses L-seryl-[protein] + ATP = O-phospho-L-seryl-[protein] + ADP + H(+). It catalyses the reaction L-threonyl-[protein] + ATP = O-phospho-L-threonyl-[protein] + ADP + H(+). In terms of biological role, essential for viral replication. It may mediate the virus' progression through DNA replication. The chain is Serine/threonine-protein kinase 1 from Ornithodoros (relapsing fever ticks).